Consider the following 234-residue polypeptide: Urease subunit alpha (234 aa).

Positions 1-102 are urease gamma; the sequence is MKLTPKELDK…LVTIHTPVEA (102 aa). The interval 103–234 is urease beta; sequence GSDKLAPGEV…GTINCGCDNK (132 aa).

It in the N-terminal section; belongs to the urease gamma subunit family. In the C-terminal section; belongs to the urease beta subunit family. In terms of assembly, heterohexamer of 3 UreA (alpha) and 3 UreB (beta) subunits.

The protein localises to the cytoplasm. It carries out the reaction urea + 2 H2O + H(+) = hydrogencarbonate + 2 NH4(+). The protein operates within nitrogen metabolism; urea degradation; CO(2) and NH(3) from urea (urease route): step 1/1. In Helicobacter heilmannii, this protein is Urease subunit alpha.